Reading from the N-terminus, the 500-residue chain is Cytochrome P450 11B1, mitochondrial (500 aa).

A mitochondrion-targeting transit peptide spans Met1 to Leu24. Cys447 provides a ligand contact to heme.

The protein belongs to the cytochrome P450 family. Requires heme as cofactor.

It localises to the mitochondrion inner membrane. The catalysed reaction is a steroid + 2 reduced [adrenodoxin] + O2 + 2 H(+) = an 11beta-hydroxysteroid + 2 oxidized [adrenodoxin] + H2O. It carries out the reaction 11-deoxycortisol + 2 reduced [adrenodoxin] + O2 + 2 H(+) = cortisol + 2 oxidized [adrenodoxin] + H2O. It catalyses the reaction 21-hydroxyprogesterone + 2 reduced [adrenodoxin] + O2 + 2 H(+) = corticosterone + 2 oxidized [adrenodoxin] + H2O. The enzyme catalyses 21-hydroxyprogesterone + 2 reduced [adrenodoxin] + O2 + 2 H(+) = 18-hydroxy-11-deoxycorticosterone + 2 oxidized [adrenodoxin] + H2O. The catalysed reaction is 21-hydroxyprogesterone + 2 reduced [adrenodoxin] + O2 + 2 H(+) = 19-hydroxy-11-deoxycorticosterone + 2 oxidized [adrenodoxin] + H2O. It carries out the reaction cortisol + 2 reduced [adrenodoxin] + O2 + 2 H(+) = 18-hydroxycortisol + 2 oxidized [adrenodoxin] + H2O. It catalyses the reaction 11-deoxycortisol + 2 reduced [adrenodoxin] + O2 + 2 H(+) = 18-hydroxy-11-deoxycortisol + 2 oxidized [adrenodoxin] + H2O. The protein operates within steroid biosynthesis; glucocorticoid biosynthesis. It functions in the pathway steroid hormone biosynthesis. Its function is as follows. A cytochrome P450 monooxygenase involved in the biosynthesis of adrenal corticoids. Catalyzes a variety of reactions that are essential for many species, including detoxification, defense, and the formation of endogenous chemicals like steroid hormones. Steroid 11beta, 18- and 19-hydroxylase with preferred regioselectivity at 11beta, then 18, and lastly 19. Catalyzes the hydroxylation of 11-deoxycortisol and 11-deoxycorticosterone (21-hydroxyprogesterone) at 11beta position, yielding cortisol or corticosterone, respectively, but cannot produce aldosterone. Mechanistically, uses molecular oxygen inserting one oxygen atom into a substrate for hydroxylation and reducing the second into a water molecule. Two electrons are provided by NADPH via a two-protein mitochondrial transfer system comprising flavoprotein FDXR (adrenodoxin/ferredoxin reductase) and nonheme iron-sulfur protein FDX1 or FDX2 (adrenodoxin/ferredoxin). Due to its lack of 18-oxidation activity, it is incapable of generating aldosterone. Could also be involved in the androgen metabolic pathway. In Cavia porcellus (Guinea pig), this protein is Cytochrome P450 11B1, mitochondrial (CYP11B1).